Consider the following 85-residue polypeptide: NAD(P)H-quinone oxidoreductase subunit L (85 aa).

2 helical membrane-spanning segments follow: residues isoleucine 17 to valine 37 and alanine 54 to leucine 74.

It belongs to the complex I NdhL subunit family. NDH-1 can be composed of about 15 different subunits; different subcomplexes with different compositions have been identified which probably have different functions.

It localises to the cellular thylakoid membrane. It carries out the reaction a plastoquinone + NADH + (n+1) H(+)(in) = a plastoquinol + NAD(+) + n H(+)(out). It catalyses the reaction a plastoquinone + NADPH + (n+1) H(+)(in) = a plastoquinol + NADP(+) + n H(+)(out). NDH-1 shuttles electrons from an unknown electron donor, via FMN and iron-sulfur (Fe-S) centers, to quinones in the respiratory and/or the photosynthetic chain. The immediate electron acceptor for the enzyme in this species is believed to be plastoquinone. Couples the redox reaction to proton translocation, and thus conserves the redox energy in a proton gradient. Cyanobacterial NDH-1 also plays a role in inorganic carbon-concentration. The sequence is that of NAD(P)H-quinone oxidoreductase subunit L from Crocosphaera subtropica (strain ATCC 51142 / BH68) (Cyanothece sp. (strain ATCC 51142)).